A 202-amino-acid chain; its full sequence is Large ribosomal subunit protein bL25 (202 aa).

Belongs to the bacterial ribosomal protein bL25 family. CTC subfamily. In terms of assembly, part of the 50S ribosomal subunit; part of the 5S rRNA/L5/L18/L25 subcomplex. Contacts the 5S rRNA. Binds to the 5S rRNA independently of L5 and L18.

Its function is as follows. This is one of the proteins that binds to the 5S RNA in the ribosome where it forms part of the central protuberance. This chain is Large ribosomal subunit protein bL25, found in Burkholderia ambifaria (strain MC40-6).